A 159-amino-acid polypeptide reads, in one-letter code: Serine-protein kinase RsbW (159 aa).

It belongs to the anti-sigma-factor family.

It carries out the reaction L-seryl-[protein] + ATP = O-phospho-L-seryl-[protein] + ADP + H(+). The catalysed reaction is L-threonyl-[protein] + ATP = O-phospho-L-threonyl-[protein] + ADP + H(+). In terms of biological role, negative regulator of sigma-B activity. Phosphorylates and inactivates its specific antagonist protein, RsbV. Upon phosphorylation of RsbV, RsbW is released and binds to sigma-B, thereby blocking its ability to form an RNA polymerase holoenzyme (E-sigma-B). The sequence is that of Serine-protein kinase RsbW from Staphylococcus aureus (strain MRSA252).